A 390-amino-acid chain; its full sequence is Succinate--CoA ligase [ADP-forming] subunit beta (390 aa).

The ATP-grasp domain occupies 9-245 (KHLLKKYNIP…TTQEDEHETM (237 aa)). ATP-binding positions include Lys-46, 53 to 55 (GRG), Glu-99, Ser-102, and Glu-107. Residues Asn-200 and Asp-214 each coordinate Mg(2+). Residues Asn-265 and 322–324 (GIV) contribute to the substrate site.

Belongs to the succinate/malate CoA ligase beta subunit family. Heterotetramer of two alpha and two beta subunits. Requires Mg(2+) as cofactor.

It catalyses the reaction succinate + ATP + CoA = succinyl-CoA + ADP + phosphate. The catalysed reaction is GTP + succinate + CoA = succinyl-CoA + GDP + phosphate. It participates in carbohydrate metabolism; tricarboxylic acid cycle; succinate from succinyl-CoA (ligase route): step 1/1. In terms of biological role, succinyl-CoA synthetase functions in the citric acid cycle (TCA), coupling the hydrolysis of succinyl-CoA to the synthesis of either ATP or GTP and thus represents the only step of substrate-level phosphorylation in the TCA. The beta subunit provides nucleotide specificity of the enzyme and binds the substrate succinate, while the binding sites for coenzyme A and phosphate are found in the alpha subunit. The polypeptide is Succinate--CoA ligase [ADP-forming] subunit beta (Coxiella burnetii (strain CbuK_Q154) (Coxiella burnetii (strain Q154))).